Reading from the N-terminus, the 317-residue chain is 8-oxo-(d)GTP phosphatase (317 aa).

In terms of domain architecture, Nudix hydrolase spans 15-148 (RIVYAAGAVL…DRKVLCRFAK (134 aa)). Residues 43–46 (RPRY), Asp-48, and 53–55 (KGK) each bind substrate. Residues Lys-53, Glu-69, and Glu-73 each coordinate Mg(2+). A Nudix box motif is present at residues 54 to 75 (GKVDPGETAPVGAVREILEETG). Substrate is bound by residues Tyr-89, Lys-99, Glu-118, and Tyr-136. Glu-118 contributes to the Mg(2+) binding site.

This sequence belongs to the Nudix hydrolase family. Requires Mg(2+) as cofactor.

It catalyses the reaction 8-oxo-dGTP + H2O = 8-oxo-dGDP + phosphate + H(+). It carries out the reaction 8-oxo-GTP + H2O = 8-oxo-GDP + phosphate + H(+). Functionally, catalyzes the conversion of 8-oxo-dGTP to 8-oxo-dGDP, and 8-oxo-GTP to 8-oxo-GDP. This chain is 8-oxo-(d)GTP phosphatase, found in Mycobacterium tuberculosis (strain CDC 1551 / Oshkosh).